A 412-amino-acid chain; its full sequence is Glucose/galactose transporter (412 aa).

Helical transmembrane passes span 21–41 (YGFALTSLTLLFFMWGFITCL), 62–82 (LIQFCFFGAYFIVSLPAGQLV), 90–110 (GIVVGLIVAAIGCALFIPAAS), 113–133 (VYALFLGALFVLASGVTILQV), 158–178 (FNSLGTTVAPVFGAVLILSAA), 192–212 (FPYLLLALAFTVLAIIFAILK), 239–259 (LGAIGIFVYVGAEVSVGSFLV), 310–330 (AFVAIILLFITVATTGHIAMW), 331–351 (SVLAIGLFNSIMFPTIFSLAL), 363–383 (GILCLAIVGGAIVPLIQGALA), and 388–408 (IHLAFLMPIICYAYIAFYGLI).

It belongs to the major facilitator superfamily. FHS transporter (TC 2.A.1.7) family.

The protein localises to the cell inner membrane. In terms of biological role, intake of glucose and galactose. The polypeptide is Glucose/galactose transporter (gluP) (Brucella abortus (strain 2308)).